The chain runs to 838 residues: Transforming acidic coiled-coil-containing protein 3 (838 aa).

S2 is modified (N-acetylserine). Phosphoserine occurs at positions 25, 39, and 71. A disordered region spans residues 123–227 (EADTDLLGDA…HGAEEECKAE (105 aa)). The span at 132–164 (ASPAFGSGSSSESGPGALADLDCSSSSQSPGSS) shows a compositional bias: low complexity. S175 and S177 each carry phosphoserine. Basic and acidic residues predominate over residues 204–227 (DPCRTESQHKAETPHGAEEECKAE). Phosphoserine is present on residues S250, S317, and S402. The segment at 311 to 527 (GRAMTLSPQE…LELKEESFRD (217 aa)) is disordered. Positions 403–412 (YHLDWDKMDD) are enriched in basic and acidic residues. S434 carries the post-translational modification Phosphoserine. A compositionally biased stretch (polar residues) spans 492–503 (NSASTSLPTSCP). The interval 522–577 (EESFRDPAEVLGTGAEVDYLEQFGTSSFKESALRKQSLYLKFDPLLRDSPGRPVPV) is necessary but not sufficient for spindle localization. S558 is modified (phosphoserine; by AURKA). The tract at residues 569–594 (DSPGRPVPVATETSSMHGANETPSGR) is disordered. Polar residues predominate over residues 579-591 (TETSSMHGANETP). Residues 594–838 (RPREAKLVEF…DDLISKMEKI (245 aa)) form a necessary but not sufficient for spindle localization region. Residues 637 to 837 (LQYSQKDLDA…CDDLISKMEK (201 aa)) adopt a coiled-coil conformation.

It belongs to the TACC family. Interacts with microtubules. Interacts with CKAP5 independently of clathrin. Interacts with CKAP5 and clathrin forming the TACC3/ch-TOG/clathrin complex located at spindle inter-microtubules bridges; TACC3 (phosphorylated at Ser-558 by AURKA) and CLTC are proposed to form a composite microtubule interaction surface. Interacts with CCDC100/CEP120. The coiled coil C-terminal region interacts with AH receptor nuclear translocator protein (ARNT) and ARNT2. Interacts with GCN5L2 and PCAF.

The protein resides in the cytoplasm. The protein localises to the cytoskeleton. It is found in the microtubule organizing center. It localises to the centrosome. Its subcellular location is the spindle. The protein resides in the spindle pole. Functionally, plays a role in the microtubule-dependent coupling of the nucleus and the centrosome. Involved in the processes that regulate centrosome-mediated interkinetic nuclear migration (INM) of neural progenitors. Acts as a component of the TACC3/ch-TOG/clathrin complex proposed to contribute to stabilization of kinetochore fibers of the mitotic spindle by acting as inter-microtubule bridge. The TACC3/ch-TOG/clathrin complex is required for the maintenance of kinetochore fiber tension. May be involved in the control of cell growth and differentiation. May contribute to cancer. This chain is Transforming acidic coiled-coil-containing protein 3 (TACC3), found in Homo sapiens (Human).